The primary structure comprises 115 residues: Nitrogenase-stabilizing/protective protein NifW (115 aa).

This sequence belongs to the NifW family. As to quaternary structure, homotrimer; associates with NifD.

Its function is as follows. May protect the nitrogenase Fe-Mo protein from oxidative damage. The polypeptide is Nitrogenase-stabilizing/protective protein NifW (Azotobacter vinelandii (strain DJ / ATCC BAA-1303)).